A 396-amino-acid chain; its full sequence is 8-amino-7-oxononanoate synthase (396 aa).

Arginine 31 contributes to the substrate binding site. Pyridoxal 5'-phosphate is bound at residue 118–119; that stretch reads GY. Histidine 143 is a binding site for substrate. Positions 189, 217, and 245 each coordinate pyridoxal 5'-phosphate. Lysine 248 is subject to N6-(pyridoxal phosphate)lysine. Residue threonine 362 participates in substrate binding.

This sequence belongs to the class-II pyridoxal-phosphate-dependent aminotransferase family. BioF subfamily. Homodimer. Pyridoxal 5'-phosphate is required as a cofactor.

The enzyme catalyses 6-carboxyhexanoyl-[ACP] + L-alanine + H(+) = (8S)-8-amino-7-oxononanoate + holo-[ACP] + CO2. It functions in the pathway cofactor biosynthesis; biotin biosynthesis. In terms of biological role, catalyzes the decarboxylative condensation of pimeloyl-[acyl-carrier protein] and L-alanine to produce 8-amino-7-oxononanoate (AON), [acyl-carrier protein], and carbon dioxide. The protein is 8-amino-7-oxononanoate synthase of Methylobacillus flagellatus (strain ATCC 51484 / DSM 6875 / VKM B-1610 / KT).